Consider the following 449-residue polypeptide: Agmatine hydroxycinnamoyltransferase 1 (449 aa).

Active-site proton acceptor residues include histidine 153 and aspartate 392.

This sequence belongs to the plant acyltransferase family. As to expression, highly expressed in roots. Expressed at low levels in flowers.

Hydroxycinnamoyl transferase that catalyzes the transfer of an acyl from p-coumaryol-CoA to agmatine, to produce coumaroyl agmatine. Can use feruloyl-CoA, caffeoyl-CoA and sinapoyl-CoA as acyl donors. Seems to be able to transfer the acyl group from p-coumaroyl-CoA and feruloyl-CoA to the acyl acceptors putrescine and spermidine. This Oryza sativa subsp. japonica (Rice) protein is Agmatine hydroxycinnamoyltransferase 1.